A 96-amino-acid chain; its full sequence is Co-chaperonin GroES 1 (96 aa).

This sequence belongs to the GroES chaperonin family. As to quaternary structure, heptamer of 7 subunits arranged in a ring. Interacts with the chaperonin GroEL.

The protein resides in the cytoplasm. Its function is as follows. Together with the chaperonin GroEL, plays an essential role in assisting protein folding. The GroEL-GroES system forms a nano-cage that allows encapsulation of the non-native substrate proteins and provides a physical environment optimized to promote and accelerate protein folding. GroES binds to the apical surface of the GroEL ring, thereby capping the opening of the GroEL channel. This is Co-chaperonin GroES 1 from Vibrio cholerae serotype O1 (strain ATCC 39315 / El Tor Inaba N16961).